Reading from the N-terminus, the 1019-residue chain is Enteropeptidase (1019 aa).

A lipid anchor (N-myristoyl glycine) is attached at Gly-2. Over 2-18 the chain is Cytoplasmic; the sequence is GSKRGISSRHHSLSSYE. A helical; Signal-anchor for type II membrane protein transmembrane segment spans residues 19–47; the sequence is IMFAALFAILVVLCAGLIAVSCLTIKESQ. The Extracellular portion of the chain corresponds to 48-1019; sequence RGAALGQSHE…FTEWIQSFLH (972 aa). An SEA domain is found at 54-169; sequence QSHEARATFK…NSVDILDKLT (116 aa). 3 N-linked (GlcNAc...) asparagine glycosylation sites follow: Asn-116, Asn-147, and Asn-179. The region spanning 182–223 is the LDL-receptor class A 1 domain; the sequence is IECLPGSSPCTDALTCIKADLFCDGEVNCPDGSDEDNKMCAT. Intrachain disulfides connect Cys-184–Cys-197, Cys-191–Cys-210, Cys-204–Cys-221, and Cys-225–Cys-253. In terms of domain architecture, CUB 1 spans 225–334; that stretch reads CDGRFLLTGS…VGFNATYTAF (110 aa). N-linked (GlcNAc...) asparagine glycosylation is found at Asn-328, Asn-335, Asn-388, Asn-440, Asn-470, Asn-503, Asn-534, and Asn-630. Residues 342-504 form the MAM domain; that stretch reads YEKINCNFED…ISLTYGICNG (163 aa). An intrachain disulfide couples Cys-524 to Cys-552. Residues 524–634 enclose the CUB 2 domain; the sequence is CGGPFELWEP…GGFKANFTTG (111 aa). Residues 641–679 enclose the LDL-receptor class A 2 domain; it reads EPCKADHFQCKNGECVPLVNLCDGHLHCEDGSDEADCVR. 3 cysteine pairs are disulfide-bonded: Cys-643/Cys-655, Cys-650/Cys-668, and Cys-662/Cys-677. In terms of domain architecture, SRCR spans 678 to 771; it reads VRFFNGTTNN…LIRLQCNHKS (94 aa). Residues Asn-682, Asn-706, and Asn-725 are each glycosylated (N-linked (GlcNAc...) asparagine). Disulfide bonds link Cys-757–Cys-767, Cys-772–Cys-896, and Cys-810–Cys-826. In terms of domain architecture, Peptidase S1 spans 785 to 1019; sequence IVGGSNAKEG…FTEWIQSFLH (235 aa). Residue His-825 is the Charge relay system of the active site. Residue Asn-848 is glycosylated (N-linked (GlcNAc...) asparagine). Asp-876 acts as the Charge relay system in catalysis. Asn-887, Asn-909, and Asn-949 each carry an N-linked (GlcNAc...) asparagine glycan. Cystine bridges form between Cys-910-Cys-977, Cys-941-Cys-956, and Cys-967-Cys-995. Ser-971 (charge relay system) is an active-site residue.

It belongs to the peptidase S1 family. In terms of assembly, heterodimer of a catalytic (light) chain and a multidomain (heavy) chain linked by a disulfide bond. The chains are derived from a single precursor that is cleaved by a trypsin-like protease. Intestinal brush border.

The protein resides in the membrane. The catalysed reaction is Activation of trypsinogen by selective cleavage of 6-Lys-|-Ile-7 bond.. Responsible for initiating activation of pancreatic proteolytic proenzymes (trypsin, chymotrypsin and carboxypeptidase A). It catalyzes the conversion of trypsinogen to trypsin which in turn activates other proenzymes including chymotrypsinogen, procarboxypeptidases, and proelastases. This Homo sapiens (Human) protein is Enteropeptidase (TMPRSS15).